An 82-amino-acid polypeptide reads, in one-letter code: Progonadoliberin-3 (82 aa).

A signal peptide spans 1–23 (MDLSNRTVVQVVVLALVAQVTLS). The residue at position 24 (Q24) is a Pyrrolidone carboxylic acid. The residue at position 33 (G33) is a Glycine amide.

Belongs to the GnRH family.

Its subcellular location is the secreted. Functionally, stimulates the secretion of gonadotropins. The polypeptide is Progonadoliberin-3 (gnrh3) (Salmo trutta (Brown trout)).